The chain runs to 173 residues: Glycine cleavage system H protein, mitochondrial (173 aa).

A mitochondrion-targeting transit peptide spans 1–48; sequence MALRVVRSVRALLCTLRAVPSPAAPCPPRPWQLGVGAVRTLRTGPALL. One can recognise a Lipoyl-binding domain in the interval 66-148; that stretch reads IGTVGISNFA…YEDGWLIKMT (83 aa). Lys-107 carries the post-translational modification N6-lipoyllysine.

Belongs to the GcvH family. In terms of assembly, interacts with GLDC. The glycine cleavage system is composed of four proteins: P (GLDC), T (GCST), L (DLD) and H (GCSH). Requires (R)-lipoate as cofactor.

It is found in the mitochondrion. The glycine cleavage system catalyzes the degradation of glycine. The H protein (GCSH) shuttles the methylamine group of glycine from the P protein (GLDC) to the T protein (GCST). Has a pivotal role in the lipoylation of enzymes involved in cellular energetics such as the mitochondrial dihydrolipoyllysine-residue acetyltransferase component of pyruvate dehydrogenase complex (DLAT), and the mitochondrial dihydrolipoyllysine-residue succinyltransferase component of 2-oxoglutarate dehydrogenase complex (DLST). The sequence is that of Glycine cleavage system H protein, mitochondrial from Homo sapiens (Human).